The primary structure comprises 149 residues: MKSVDLKILDARMREYLPAYATPGSAGLDLRACTEASLVIEPGQTVLVPTGLAIHIGDPRYAAMILPRSGLGHKHGIVLGNLVGLIDSDYQGQLMVSTWNRGTQPFTLDPMERLAQLVIVPVQQVAFNVVEDFDASERGAGGFGSTGRA.

Substrate contacts are provided by residues 68-70, N81, 85-87, and M95; these read RSG and LID.

Belongs to the dUTPase family. Requires Mg(2+) as cofactor.

It catalyses the reaction dUTP + H2O = dUMP + diphosphate + H(+). Its pathway is pyrimidine metabolism; dUMP biosynthesis; dUMP from dCTP (dUTP route): step 2/2. Its function is as follows. This enzyme is involved in nucleotide metabolism: it produces dUMP, the immediate precursor of thymidine nucleotides and it decreases the intracellular concentration of dUTP so that uracil cannot be incorporated into DNA. The polypeptide is Deoxyuridine 5'-triphosphate nucleotidohydrolase (Bordetella bronchiseptica (strain ATCC BAA-588 / NCTC 13252 / RB50) (Alcaligenes bronchisepticus)).